The following is a 434-amino-acid chain: Mitochondrial distribution and morphology protein 10 (434 aa).

This sequence belongs to the MDM10 family. As to quaternary structure, component of the ER-mitochondria encounter structure (ERMES) or MDM complex, composed of mmm1, mdm10, mdm12 and mdm34. Associates with the mitochondrial outer membrane sorting assembly machinery SAM(core) complex.

The protein localises to the mitochondrion outer membrane. In terms of biological role, component of the ERMES/MDM complex, which serves as a molecular tether to connect the endoplasmic reticulum and mitochondria. Components of this complex are involved in the control of mitochondrial shape and protein biogenesis and may function in phospholipid exchange. mdm10 is involved in the late assembly steps of the general translocase of the mitochondrial outer membrane (TOM complex). Functions in the tom40-specific route of the assembly of outer membrane beta-barrel proteins, including the association of tom40 with the receptor tom22 and small TOM proteins. Can associate with the SAM(core) complex as well as the mdm12-mmm1 complex, both involved in late steps of the major beta-barrel assembly pathway, that is responsible for biogenesis of all outer membrane beta-barrel proteins. May act as a switch that shuttles between both complexes and channels precursor proteins into the tom40-specific pathway. Plays a role in mitochondrial morphology and in the inheritance of mitochondria. The chain is Mitochondrial distribution and morphology protein 10 (mdmB) from Aspergillus niger (strain ATCC MYA-4892 / CBS 513.88 / FGSC A1513).